The sequence spans 380 residues: Hydrogenase maturation factor HypD2 (380 aa).

Cysteine 36, cysteine 64, and cysteine 67 together coordinate Fe cation.

The protein belongs to the HypD family. It depends on [4Fe-4S] cluster as a cofactor.

Its pathway is protein modification; [NiFe] hydrogenase maturation. Functionally, involved in the maturation of [NiFe] hydrogenases. Involved in the biosynthesis of the Fe(CN)(2)CO cofactor. This chain is Hydrogenase maturation factor HypD2 (hypD2), found in Bradyrhizobium diazoefficiens (strain JCM 10833 / BCRC 13528 / IAM 13628 / NBRC 14792 / USDA 110).